The following is a 359-amino-acid chain: 3-dehydroquinate synthase (359 aa).

Residues 106 to 110 (GVVGD), 130 to 131 (TS), lysine 143, and lysine 152 contribute to the NAD(+) site. Zn(2+)-binding residues include glutamate 185, histidine 246, and histidine 263.

It belongs to the sugar phosphate cyclases superfamily. Dehydroquinate synthase family. Requires Co(2+) as cofactor. Zn(2+) serves as cofactor. It depends on NAD(+) as a cofactor.

The protein localises to the cytoplasm. It catalyses the reaction 7-phospho-2-dehydro-3-deoxy-D-arabino-heptonate = 3-dehydroquinate + phosphate. The protein operates within metabolic intermediate biosynthesis; chorismate biosynthesis; chorismate from D-erythrose 4-phosphate and phosphoenolpyruvate: step 2/7. Its function is as follows. Catalyzes the conversion of 3-deoxy-D-arabino-heptulosonate 7-phosphate (DAHP) to dehydroquinate (DHQ). The chain is 3-dehydroquinate synthase from Clostridium kluyveri (strain ATCC 8527 / DSM 555 / NBRC 12016 / NCIMB 10680 / K1).